We begin with the raw amino-acid sequence, 362 residues long: Chorismate synthase (362 aa).

Arginine 46 contributes to the NADP(+) binding site. FMN-binding positions include 122–124 (RSS), 238–239 (NA), glycine 278, 293–297 (KPTPS), and arginine 319.

The protein belongs to the chorismate synthase family. In terms of assembly, homotetramer. The cofactor is FMNH2.

The enzyme catalyses 5-O-(1-carboxyvinyl)-3-phosphoshikimate = chorismate + phosphate. It functions in the pathway metabolic intermediate biosynthesis; chorismate biosynthesis; chorismate from D-erythrose 4-phosphate and phosphoenolpyruvate: step 7/7. Its function is as follows. Catalyzes the anti-1,4-elimination of the C-3 phosphate and the C-6 proR hydrogen from 5-enolpyruvylshikimate-3-phosphate (EPSP) to yield chorismate, which is the branch point compound that serves as the starting substrate for the three terminal pathways of aromatic amino acid biosynthesis. This reaction introduces a second double bond into the aromatic ring system. The chain is Chorismate synthase from Campylobacter jejuni subsp. jejuni serotype O:2 (strain ATCC 700819 / NCTC 11168).